A 372-amino-acid polypeptide reads, in one-letter code: Proline-rich P65 protein homolog (372 aa).

Residues 1-37 (MEKNRSAFQQNQQASNQPFNQDQNQYYQDPNQQQFNQ) are compositionally biased toward low complexity. The tract at residues 1–100 (MEKNRSAFQQ…GFDPNQQYYQ (100 aa)) is disordered. 13 consecutive repeat copies span residues 29-40 (DPNQQQFNQSGF), 41-52 (DPNQQQFNQPGF), 53-60 (DPNQQYYQ), 61-72 (DPNQQQFNQAGF), 73-80 (DQNQQYYQ), 81-92 (DPNQQQFNQPGF), 93-100 (DPNQQYYQ), 101-112 (DPNQQQFNQAGF), 113-119 (DQNQYYQ), 120-131 (DPNQQQFNQSGF), 132-138 (DQNQYYQ), 139-150 (DPNQQQFNQPSF), and 151-162 (DLNNQQFNQPGF). The span at 38-49 (SGFDPNQQQFNQ) shows a compositional bias: polar residues. A compositionally biased stretch (low complexity) spans 53 to 100 (DPNQQYYQDPNQQQFNQAGFDQNQQYYQDPNQQQFNQPGFDPNQQYYQ). Residues 122–150 (NQQQFNQSGFDQNQYYQDPNQQQFNQPSF) form a disordered region.

This chain is Proline-rich P65 protein homolog, found in Mycoplasma genitalium (strain ATCC 33530 / DSM 19775 / NCTC 10195 / G37) (Mycoplasmoides genitalium).